Consider the following 892-residue polypeptide: MGTQTAAASDIAQHTPMMQQYLRIKGEHPGTLVFYRMGDFYELFFDDAEKAARLLDLTLTQRGASGGNPIKMAGVPHHAVEQYLAKLVKLGESVAICEQIGDPATSKGPVERKVVRVVTPGTLTDAALLSDKSDTYLLAACAGHNRRGVVTTVGLAWLNLASGALRLAEVAPDQVAAALERIRPAEILVADAPSSSDANAWSVPTGFGATTRVPLWHFDVASGTQRLCDQLEVAGLDGFGAHSLTCACGAAGALLLYAAATQGQQLRHVRSLKVEYESEYIGLDPSTRRNLELTETLRGTDSPTLCSLLDTCCTTMGSRLLRHWLHHPPRDASFAQARQQAIGALLDSPPQASLDALCGALRQISDIERITGRLALLSARPRDLSSLRDTFIALPELRAQLVPLTGAADSLARIHASLEPPADCVDLLTRAVAQEPAAMIRDGGVIARGYDVDLDELRDISENCGQFLIDLETRERARTGIGNLRVEYNKVHGFYIEVTRGQTDKVPDDYRRRQTLKNAERYITPELKTFEDKALSAQERALAREKALYDALLQSLLPFIADCQRVASALAELDLLAAFAERARALDWVAPNFSATGGIDIEQGRHPVVEAQVEQFIANDCMLNPERKLLLITGPNMGGKSTFMRQTALIALMAYVGSYVPARRASFGPIDRIFTRIGAADDLAGGRSTFMVEMTEAAAILNDATPQSLVLMDEIGRGTSTFDGLALAWAIARHLLAHNGCHTLFATHYFELTQLPAEFPHAANVHLSAVEHGHGIVFLHAVNEGPANQSYGLQVAQLAGVPNAVIRAARKHLAYLEQQSAGAPAPQLDLFSAPVAMLEDADDESIAPALDAATRTLVERLRDIDPNDLRPRDALDLLYELHELAKSPDAPR.

ATP is bound at residue 634–641; sequence GPNMGGKS.

Belongs to the DNA mismatch repair MutS family.

This protein is involved in the repair of mismatches in DNA. It is possible that it carries out the mismatch recognition step. This protein has a weak ATPase activity. The polypeptide is DNA mismatch repair protein MutS (Paraburkholderia phymatum (strain DSM 17167 / CIP 108236 / LMG 21445 / STM815) (Burkholderia phymatum)).